The primary structure comprises 450 residues: Phosphoglucosamine mutase (450 aa).

The active-site Phosphoserine intermediate is the S101. Mg(2+) contacts are provided by S101, D240, D242, and D244. S101 carries the phosphoserine modification.

Belongs to the phosphohexose mutase family. Mg(2+) is required as a cofactor. Activated by phosphorylation.

It carries out the reaction alpha-D-glucosamine 1-phosphate = D-glucosamine 6-phosphate. In terms of biological role, catalyzes the conversion of glucosamine-6-phosphate to glucosamine-1-phosphate. The sequence is that of Phosphoglucosamine mutase from Streptococcus thermophilus (strain ATCC BAA-250 / LMG 18311).